We begin with the raw amino-acid sequence, 130 residues long: Flagellar assembly factor FliW (130 aa).

It belongs to the FliW family. As to quaternary structure, interacts with translational regulator CsrA and flagellin(s).

Its subcellular location is the cytoplasm. In terms of biological role, acts as an anti-CsrA protein, binds CsrA and prevents it from repressing translation of its target genes, one of which is flagellin. Binds to flagellin and participates in the assembly of the flagellum. The chain is Flagellar assembly factor FliW from Borrelia hermsii (strain HS1 / DAH).